Here is a 2191-residue protein sequence, read N- to C-terminus: Genome polyprotein (2191 aa).

Gly-2 carries the N-myristoyl glycine; by host lipid modification. The Cytoplasmic portion of the chain corresponds to 2-1501; that stretch reads GAQVSTQKTG…HVSRAFICLQ (1500 aa). The interval 566-582 is amphipathic alpha-helix; the sequence is FYQNDVQNAVERSIVRV. Residues His-878 and Asp-896 each act as for protease 2A activity in the active site. Residues Cys-913 and Cys-915 each coordinate Zn(2+). Residue Cys-967 is the For protease 2A activity of the active site. 2 residues coordinate Zn(2+): Cys-973 and His-975. Residues 1107–1179 are membrane-binding; it reads NNGWLKKFTE…EQSAPSQSDQ (73 aa). Residues 1107-1245 form an oligomerization region; that stretch reads NNGWLKKFTE…SPGVGKSVAT (139 aa). Residues 1128-1132 are RNA-binding; sequence AIKIQ. The 157-residue stretch at 1211-1367 folds into the SF3 helicase domain; the sequence is EKKMSNYIQF…SMYNQNGKIN (157 aa). Zn(2+)-binding residues include Cys-1375, Cys-1387, and Cys-1392. A C4-type; degenerate zinc finger spans residues 1375–1392; that stretch reads CDEECCPVNFKKCCPLVC. Residues 1419-1426 are RNA-binding; that stretch reads EYNHRHSV. Positions 1430 to 1435 are oligomerization; the sequence is LEALFQ. An intramembrane segment occupies 1502-1517; that stretch reads ALTTFVSVAGIIYIIY. Residues 1518-2191 are Cytoplasmic-facing; that stretch reads KLFAGFQGAY…TLRRKWLDSF (674 aa). Tyr-1527 bears the O-(5'-phospho-RNA)-tyrosine mark. The Peptidase C3 domain occupies 1547 to 1725; the sequence is GPAFEFAVAM…FSAALLKHYF (179 aa). Catalysis depends on for protease 3C activity residues His-1586, Glu-1617, and Cys-1693. One can recognise a RdRp catalytic domain in the interval 1956 to 2072; sequence GHLIAFDYSG…SYPWPIDASL (117 aa). Residues Asp-1962 and Asp-2058 each coordinate Mg(2+).

It belongs to the picornaviruses polyprotein family. Interacts with capsid protein VP1 and capsid protein VP3 to form heterotrimeric protomers. In terms of assembly, interacts with capsid protein VP0, and capsid protein VP3 to form heterotrimeric protomers. Five protomers subsequently associate to form pentamers which serve as building blocks for the capsid. Interacts with capsid protein VP2, capsid protein VP3 and capsid protein VP4 following cleavage of capsid protein VP0. Interacts with host CD55 and FCGRT; these interactions promote virus attachment to the host cell and subsequent internalization. As to quaternary structure, interacts with capsid protein VP1 and capsid protein VP3 in the mature capsid. Interacts with host CD55 and FCGRT; these interactions promote virus attachment to the host cell and subsequent internalization. Interacts with capsid protein VP0 and capsid protein VP1 to form heterotrimeric protomers. Five protomers subsequently associate to form pentamers which serve as building blocks for the capsid. Interacts with capsid protein VP4 in the mature capsid. Interacts with protein 2C; this interaction may be important for virion morphogenesis. Interacts with host FCGRT; this interaction promotes virus attachment to the host cell and subsequent internalization. In terms of assembly, interacts with capsid protein VP1 and capsid protein VP3. As to quaternary structure, homodimer. Homohexamer; forms a hexameric ring structure with 6-fold symmetry characteristic of AAA+ ATPases. Interacts (via N-terminus) with host RTN3 (via reticulon domain); this interaction is important for viral replication. Interacts with capsid protein VP3; this interaction may be important for virion morphogenesis. In terms of assembly, interacts with protein 3CD. As to quaternary structure, homodimer. Interacts with host GBF1. Interacts (via GOLD domain) with host ACBD3 (via GOLD domain); this interaction allows the formation of a viral protein 3A/ACBD3 heterotetramer with a 2:2 stoichiometry, which will stimulate the recruitment of host PI4KB in order to synthesize PI4P at the viral RNA replication sites. Interacts with RNA-directed RNA polymerase. In terms of assembly, interacts with protein 3AB and with RNA-directed RNA polymerase. As to quaternary structure, interacts with Viral protein genome-linked and with protein 3CD. Mg(2+) serves as cofactor. Specific enzymatic cleavages in vivo by the viral proteases yield processing intermediates and the mature proteins. In terms of processing, myristoylation is required for the formation of pentamers during virus assembly. Further assembly of 12 pentamers and a molecule of genomic RNA generates the provirion. Post-translationally, during virion maturation, immature virions are rendered infectious following cleavage of VP0 into VP4 and VP2. This maturation seems to be an autocatalytic event triggered by the presence of RNA in the capsid and it is followed by a conformational change infectious virion. Myristoylation is required during RNA encapsidation and formation of the mature virus particle. In terms of processing, VPg is uridylylated by the polymerase into VPg-pUpU. This acts as a nucleotide-peptide primer for the genomic RNA replication.

The protein localises to the virion. The protein resides in the host cytoplasm. It is found in the host cytoplasmic vesicle membrane. It localises to the host nucleus. It catalyses the reaction a ribonucleoside 5'-triphosphate + H2O = a ribonucleoside 5'-diphosphate + phosphate + H(+). The enzyme catalyses Selective cleavage of Tyr-|-Gly bond in the picornavirus polyprotein.. It carries out the reaction RNA(n) + a ribonucleoside 5'-triphosphate = RNA(n+1) + diphosphate. The catalysed reaction is Selective cleavage of Gln-|-Gly bond in the poliovirus polyprotein. In other picornavirus reactions Glu may be substituted for Gln, and Ser or Thr for Gly.. Its activity is regulated as follows. Replication or transcription is subject to high level of random mutations by the nucleotide analog ribavirin. Forms an icosahedral capsid of pseudo T=3 symmetry with capsid proteins VP2 and VP3. The capsid is 300 Angstroms in diameter, composed of 60 copies of each capsid protein and enclosing the viral positive strand RNA genome. Capsid protein VP1 mainly forms the vertices of the capsid. Capsid protein VP1 interacts with host cell receptor to provide virion attachment to target host cells. This attachment induces virion internalization. Tyrosine kinases are probably involved in the entry process. After binding to its receptor, the capsid undergoes conformational changes. Capsid protein VP1 N-terminus (that contains an amphipathic alpha-helix) and capsid protein VP4 are externalized. Together, they shape a pore in the host membrane through which viral genome is translocated to host cell cytoplasm. Its function is as follows. Forms an icosahedral capsid of pseudo T=3 symmetry with capsid proteins VP2 and VP3. The capsid is 300 Angstroms in diameter, composed of 60 copies of each capsid protein and enclosing the viral positive strand RNA genome. In terms of biological role, lies on the inner surface of the capsid shell. After binding to the host receptor, the capsid undergoes conformational changes. Capsid protein VP4 is released, Capsid protein VP1 N-terminus is externalized, and together, they shape a pore in the host membrane through which the viral genome is translocated into the host cell cytoplasm. Functionally, component of immature procapsids, which is cleaved into capsid proteins VP4 and VP2 after maturation. Allows the capsid to remain inactive before the maturation step. Cysteine protease that cleaves viral polyprotein and specific host proteins. It is responsible for the autocatalytic cleavage between the P1 and P2 regions, which is the first cleavage occurring in the polyprotein. Also cleaves the host translation initiation factor EIF4G1, in order to shut down the capped cellular mRNA translation. Inhibits the host nucleus-cytoplasm protein and RNA trafficking by cleaving host members of the nuclear pores. Counteracts stress granule formation probably by antagonizing its assembly or promoting its dissassembly. Its function is as follows. Plays an essential role in the virus replication cycle by acting as a viroporin. Creates a pore in the host endoplasmic reticulum and as a consequence releases Ca2+ in the cytoplasm of infected cell. In turn, high levels of cytoplasmic calcium may trigger membrane trafficking and transport of viral ER-associated proteins to viroplasms, sites of viral genome replication. In terms of biological role, induces and associates with structural rearrangements of intracellular membranes. Displays RNA-binding, nucleotide binding and NTPase activities. May play a role in virion morphogenesis and viral RNA encapsidation by interacting with the capsid protein VP3. Functionally, localizes the viral replication complex to the surface of membranous vesicles. Together with protein 3CD binds the Cis-Active RNA Element (CRE) which is involved in RNA synthesis initiation. Acts as a cofactor to stimulate the activity of 3D polymerase, maybe through a nucleid acid chaperone activity. Localizes the viral replication complex to the surface of membranous vesicles. It inhibits host cell endoplasmic reticulum-to-Golgi apparatus transport and causes the disassembly of the Golgi complex, possibly through GBF1 interaction. This would result in depletion of MHC, trail receptors and IFN receptors at the host cell surface. Plays an essential role in viral RNA replication by recruiting ACBD3 and PI4KB at the viral replication sites, thereby allowing the formation of the rearranged membranous structures where viral replication takes place. Its function is as follows. Acts as a primer for viral RNA replication and remains covalently bound to viral genomic RNA. VPg is uridylylated prior to priming replication into VPg-pUpU. The oriI viral genomic sequence may act as a template for this. The VPg-pUpU is then used as primer on the genomic RNA poly(A) by the RNA-dependent RNA polymerase to replicate the viral genome. During genome replication, the VPg-RNA linkage is removed by the host TDP2, thereby accelerating replication. During the late stage of the replication cycle, host TDP2 is excluded from sites of viral RNA synthesis and encapsidation, allowing for the generation of progeny virions. In terms of biological role, involved in the viral replication complex and viral polypeptide maturation. It exhibits protease activity with a specificity and catalytic efficiency that is different from protease 3C. Protein 3CD binds to the 5'UTR of the viral genome. Functionally, replicates the viral genomic RNA on the surface of intracellular membranes. May form linear arrays of subunits that propagate along a strong head-to-tail interaction called interface-I. Covalently attaches UMP to a tyrosine of VPg, which is used to prime RNA synthesis. The positive stranded RNA genome is first replicated at virus induced membranous vesicles, creating a dsRNA genomic replication form. This dsRNA is then used as template to synthesize positive stranded RNA genomes. ss(+)RNA genomes are either translated, replicated or encapsidated. Major viral protease that mediates proteolytic processing of the polyprotein. Cleaves host EIF5B, contributing to host translation shutoff. Also cleaves host PABPC1, contributing to host translation shutoff. Cleaves host NLRP1, triggers host N-glycine-mediated degradation of the autoinhibitory NLRP1 N-terminal fragment. This is Genome polyprotein from Echovirus 6 (strain Charles).